Reading from the N-terminus, the 269-residue chain is Chymotrypsin-like elastase family member 2A (269 aa).

The signal sequence occupies residues 1 to 16 (MIRALLLSTLVAGALS). A propeptide spans 17–28 (CGLPANLPQLPR) (activation peptide). The Peptidase S1 domain occupies 29 to 267 (VVGGEDARPN…YIDWINSVIA (239 aa)). Cysteines 58 and 74 form a disulfide. Residues His-73 and Asp-121 each act as charge relay system in the active site. Intrachain disulfides connect Cys-155/Cys-222, Cys-186/Cys-202, and Cys-212/Cys-243. Catalysis depends on Ser-216, which acts as the Charge relay system.

This sequence belongs to the peptidase S1 family. Elastase subfamily. Interacts with CPA1. Interacts with SERPINA1. Pancreas.

The protein resides in the secreted. The catalysed reaction is Preferential cleavage: Leu-|-Xaa, Met-|-Xaa and Phe-|-Xaa. Hydrolyzes elastin.. In terms of biological role, elastase that enhances insulin signaling and might have a physiologic role in cellular glucose metabolism. Circulates in plasma and reduces platelet hyperactivation, triggers both insulin secretion and degradation, and increases insulin sensitivity. This is Chymotrypsin-like elastase family member 2A (CELA2A) from Sus scrofa (Pig).